A 114-amino-acid polypeptide reads, in one-letter code: Secretoglobin family 2B member 2 (114 aa).

Residues 1-23 (MKGTLLLLALLVTGELGFQRTEA) form the signal peptide.

Belongs to the secretoglobin family. In terms of tissue distribution, expressed in lacrimal gland.

Its subcellular location is the secreted. The sequence is that of Secretoglobin family 2B member 2 (Scgb2b2) from Mus musculus (Mouse).